The chain runs to 274 residues: MKREKKSFHLHMLSDATGETLISVGRAVASQYTMSQATEHIYPMIRNKTQLQRALDEIQQEPGIVLYTIIDKKIKILLRKRCEKIEIPCIDILHPVLNAFKSYLGIPTNLRVSAQHGLNADYFRRIEALDFTIEHDDGQSPNSLSDADVILVGISRTSKTPTSIYLANRGIKTANVPLIPGINLPDTLLGAKNALIIGLIASVERISHIRQNRNLGDDFSLESYTDRINISEELTYAKRICERFSWPVIDVTRRSIEETAAEIFELLSRFREGK.

Position 153–160 (153–160 (GISRTSKT)) interacts with ADP.

The protein belongs to the pyruvate, phosphate/water dikinase regulatory protein family. PDRP subfamily.

The catalysed reaction is N(tele)-phospho-L-histidyl/L-threonyl-[pyruvate, phosphate dikinase] + ADP = N(tele)-phospho-L-histidyl/O-phospho-L-threonyl-[pyruvate, phosphate dikinase] + AMP + H(+). The enzyme catalyses N(tele)-phospho-L-histidyl/O-phospho-L-threonyl-[pyruvate, phosphate dikinase] + phosphate + H(+) = N(tele)-phospho-L-histidyl/L-threonyl-[pyruvate, phosphate dikinase] + diphosphate. Bifunctional serine/threonine kinase and phosphorylase involved in the regulation of the pyruvate, phosphate dikinase (PPDK) by catalyzing its phosphorylation/dephosphorylation. The polypeptide is Putative pyruvate, phosphate dikinase regulatory protein (Bartonella henselae (strain ATCC 49882 / DSM 28221 / CCUG 30454 / Houston 1) (Rochalimaea henselae)).